The primary structure comprises 201 residues: Myelomonocytic growth factor (201 aa).

Residues Met1–Gly23 form the signal peptide. Intrachain disulfides connect Cys61/Cys67 and Cys89/Cys99. N-linked (GlcNAc...) asparagine glycosylation is found at Asn123 and Asn137.

It belongs to the IL-6 superfamily.

The protein localises to the secreted. Hematopoietic growth factor that stimulates the proliferation and colony formation of normal and transformed avian cells of the myeloid lineage. The chain is Myelomonocytic growth factor from Gallus gallus (Chicken).